The chain runs to 160 residues: Sec-independent protein translocase protein TatB (160 aa).

A helical transmembrane segment spans residues Met-1–Gly-21. The disordered stretch occupies residues His-118–Val-160. 2 stretches are compositionally biased toward basic and acidic residues: residues Ala-128–Lys-140 and Asn-149–Val-160.

Belongs to the TatB family. As to quaternary structure, the Tat system comprises two distinct complexes: a TatABC complex, containing multiple copies of TatA, TatB and TatC subunits, and a separate TatA complex, containing only TatA subunits. Substrates initially bind to the TatABC complex, which probably triggers association of the separate TatA complex to form the active translocon.

Its subcellular location is the cell inner membrane. Its function is as follows. Part of the twin-arginine translocation (Tat) system that transports large folded proteins containing a characteristic twin-arginine motif in their signal peptide across membranes. Together with TatC, TatB is part of a receptor directly interacting with Tat signal peptides. TatB may form an oligomeric binding site that transiently accommodates folded Tat precursor proteins before their translocation. The chain is Sec-independent protein translocase protein TatB from Helicobacter pylori (strain J99 / ATCC 700824) (Campylobacter pylori J99).